We begin with the raw amino-acid sequence, 249 residues long: Methyl-coenzyme M reductase I subunit gamma (249 aa).

Arginine 120 contacts coenzyme M.

Belongs to the methyl-coenzyme M reductase gamma subunit family. MCR is a hexamer of two alpha, two beta, and two gamma chains, forming a dimer of heterotrimers. Coenzyme F430 is required as a cofactor.

It localises to the cytoplasm. The enzyme catalyses coenzyme B + methyl-coenzyme M = methane + coenzyme M-coenzyme B heterodisulfide. It functions in the pathway one-carbon metabolism; methyl-coenzyme M reduction; methane from methyl-coenzyme M: step 1/1. Component of the methyl-coenzyme M reductase (MCR) I that catalyzes the reductive cleavage of methyl-coenzyme M (CoM-S-CH3 or 2-(methylthio)ethanesulfonate) using coenzyme B (CoB or 7-mercaptoheptanoylthreonine phosphate) as reductant which results in the production of methane and the mixed heterodisulfide of CoB and CoM (CoM-S-S-CoB). This is the final step in methanogenesis. This chain is Methyl-coenzyme M reductase I subunit gamma (mcrG), found in Methanothermobacter thermautotrophicus (strain ATCC 29096 / DSM 1053 / JCM 10044 / NBRC 100330 / Delta H) (Methanobacterium thermoautotrophicum).